Consider the following 477-residue polypeptide: Acetolactate synthase small subunit 2, chloroplastic (477 aa).

The N-terminal 53 residues, 1-53, are a transit peptide targeting the chloroplast; it reads MAATTTATSLFSSRLHFQNQNQGYGFPAKTPNSLQVNQIIDGRKMRNATVLSA. 2 ACT domains span residues 78 to 150 and 309 to 383; these read TISV…DLSK and TLSL…NITH. Residues Asp-85, Ile-89, Ile-90, Asn-103, Ile-104, Asn-316, Val-320, Leu-321, Asn-334, and Ile-335 each coordinate L-valine.

Belongs to the acetolactate synthase small subunit family. The acetolactate synthase complex contains 4 homodimers of the large catalytic subunits, and 1 homotetramer of the small regulatory subunits. Expressed in roots in the vascular tissuem in cells around the quiescent center, in floral organs at the tips of young siliques and in the joint region between the silique and the pedicel. Barely detectable in mature leaves or siliques.

It localises to the plastid. The protein resides in the chloroplast. The protein localises to the peroxisome. The protein operates within amino-acid biosynthesis; L-isoleucine biosynthesis; L-isoleucine from 2-oxobutanoate: step 1/4. Its pathway is amino-acid biosynthesis; L-valine biosynthesis; L-valine from pyruvate: step 1/4. Its function is as follows. Regulatory subunit of acetohydroxy-acid synthase. Involved in the feed-back inhibition by branched-chain amino acids but not in herbicide tolerance. May play a role in valine and isoleucine-mediated feedback inhibition in roots. In vitro, inhibited by valine, but not leucine or isoleucine. Required for reproductive development and sodium homeostasis. This Arabidopsis thaliana (Mouse-ear cress) protein is Acetolactate synthase small subunit 2, chloroplastic.